The following is a 446-amino-acid chain: Chromosomal replication initiator protein DnaA (446 aa).

Positions Met-1–Pro-92 are domain I, interacts with DnaA modulators. Residues Pro-93–Ser-109 are domain II. The segment at Met-110–Ser-326 is domain III, AAA+ region. Residues Gly-154, Gly-156, Lys-157, and Thr-158 each contribute to the ATP site. Residues Ser-327–Lys-446 are domain IV, binds dsDNA.

This sequence belongs to the DnaA family. In terms of assembly, oligomerizes as a right-handed, spiral filament on DNA at oriC.

Its subcellular location is the cytoplasm. Functionally, plays an essential role in the initiation and regulation of chromosomal replication. ATP-DnaA binds to the origin of replication (oriC) to initiate formation of the DNA replication initiation complex once per cell cycle. Binds the DnaA box (a 9 base pair repeat at the origin) and separates the double-stranded (ds)DNA. Forms a right-handed helical filament on oriC DNA; dsDNA binds to the exterior of the filament while single-stranded (ss)DNA is stabiized in the filament's interior. The ATP-DnaA-oriC complex binds and stabilizes one strand of the AT-rich DNA unwinding element (DUE), permitting loading of DNA polymerase. After initiation quickly degrades to an ADP-DnaA complex that is not apt for DNA replication. Binds acidic phospholipids. The chain is Chromosomal replication initiator protein DnaA from Bacillus cereus (strain 03BB102).